A 369-amino-acid chain; its full sequence is MDPRKVNELRAFVKMCKQDPSVLHTEEMRFLREWVESMGGKVPPATQKAKSEENTKEEKPDSKKVEEDLKADEPSSEESDLEIDKEGVIEPDTDAPQEMGDENAEITEEMMDQANDKKVAAIEALNDGELQKAIDLFTDAIKLNPRLAILYAKRASVFVKLQKPNAAIRDCDRAIEINPDSAQPYKWRGKAHRLLGHWEEAAHDLALACKLDYDEDASAMLKEVQPRAQKIAEHRRKYERKREEREIKERIERVKKAREEHERAQREEEARRQSGAQYGSFPGGFPGGMPGNFPGGMPGMGGGMPGMAGMPGLNEILSDPEVLAAMQDPEVMVAFQDVAQNPANMSKYQSNPKVMNLISKLSAKFGGQA.

The disordered stretch occupies residues 38-97 (MGGKVPPATQKAKSEENTKEEKPDSKKVEEDLKADEPSSEESDLEIDKEGVIEPDTDAPQ). A compositionally biased stretch (basic and acidic residues) spans 49 to 73 (AKSEENTKEEKPDSKKVEEDLKADE). 3 TPR repeats span residues 114–147 (ANDKKVAAIEALNDGELQKAIDLFTDAIKLNPRL), 148–181 (AILYAKRASVFVKLQKPNAAIRDCDRAIEINPDS), and 182–215 (AQPYKWRGKAHRLLGHWEEAAHDLALACKLDYDE). Residues 256–272 (KAREEHERAQREEEARR) show a composition bias toward basic and acidic residues. Residues 256 to 300 (KAREEHERAQREEEARRQSGAQYGSFPGGFPGGMPGNFPGGMPGM) are disordered. The span at 281–300 (FPGGFPGGMPGNFPGGMPGM) shows a compositional bias: gly residues. The STI1 domain maps to 319–358 (DPEVLAAMQDPEVMVAFQDVAQNPANMSKYQSNPKVMNLI). Serine 346 carries the phosphoserine; by GRK5 modification. Lysine 353 and lysine 360 each carry N6-acetyllysine.

Belongs to the FAM10 family. As to quaternary structure, homotetramer. Interacts with HSC70 as well as DNAJ homologs and HSP90. Interacts (via the C-terminus 303- 319 AA) with GRK5.

It is found in the cytoplasm. One HIP oligomer binds the ATPase domains of at least two HSC70 molecules dependent on activation of the HSC70 ATPase by HSP40. Stabilizes the ADP state of HSC70 that has a high affinity for substrate protein. Through its own chaperone activity, it may contribute to the interaction of HSC70 with various target proteins. This chain is Hsc70-interacting protein (ST13), found in Homo sapiens (Human).